The chain runs to 327 residues: Aquaporin-1 (327 aa).

The segment at 1–34 is disordered; the sequence is MSSNDSNDTDKQHTRLDPTGVDDAYIPPEQPETK. Topologically, residues 1 to 48 are cytoplasmic; sequence MSSNDSNDTDKQHTRLDPTGVDDAYIPPEQPETKHHRFKISKDTLRNH. Residues 49 to 69 form a helical membrane-spanning segment; sequence FIAAAGEFCGTFMFLWCAYVI. At 70-91 the chain is on the extracellular side; sequence CNVANHDVALVAAPDGSHPGQL. A helical transmembrane segment spans residues 92 to 112; it reads IMIAIGFGFSVMFSIWCFAGV. Residues 113–136 lie on the Cytoplasmic side of the membrane; the sequence is SGGALNPAVSLSLCLARAVSPTRC. The short motif at 118–120 is the NPA 1 element; that stretch reads NPA. Residues 137–157 traverse the membrane as a helical segment; sequence VVMWVSQIVAGMAAGGAASAM. At 158-176 the chain is on the extracellular side; sequence TPGEVLFANSLGLGCSRTR. The helical transmembrane segment at 177–197 threads the bilayer; the sequence is GLFLEMFGTAILCLTVLMTAV. The Cytoplasmic segment spans residues 198-203; it reads EKRETN. A helical transmembrane segment spans residues 204-224; it reads FMAALPIGISLFIAHVALTAY. The Extracellular portion of the chain corresponds to 225-248; the sequence is TGTGVNPARSLGAAVAARYFPHYH. An NPA 2 motif is present at residues 230-232; the sequence is NPA. Residues 249-269 form a helical membrane-spanning segment; it reads WIYWIGPLLGSILAWSVWQLL. The Cytoplasmic portion of the chain corresponds to 270 to 327; it reads QILDYTTYVTAEKAASTKEKAQKKVKPAVPLLWLKSNFSLLFFISRSLALNVIIFGKN.

Belongs to the MIP/aquaporin (TC 1.A.8) family.

It localises to the endoplasmic reticulum membrane. The protein localises to the cell membrane. In terms of biological role, water channel required to facilitate the transport of water across membranes. Involved in sporulation, freeze tolerance and osmotolerance. Is non-functional in most laboratory strains. The protein is Aquaporin-1 (AQY1) of Saccharomyces cerevisiae (strain Lalvin EC1118 / Prise de mousse) (Baker's yeast).